A 465-amino-acid chain; its full sequence is VGFKAGVKDYKLTYYTPDYETKDTDILAAFRVTPQPGVPPEEAGAAVAAESSTGTWTTVWTDGVTSLDRYKGRCYHIEPVAGEESQFIAYVAYPLDLFEEGSVTNMFTSIVGNVFGFKALRALRLEDLRIPTAYSKTFQGPPHGIQVERDKLNKYGRPLLGCTIKPKLGLSAKNYGRAVYECLRGGLDFTKDDENVNSQPFMRWRDRFLFCAEALYKAQAETGEIKGHYLNATAGTCEEMMKRAIFARELGVPIVMHDYLTGGFTANTSLAHYCRDNGLLLHIHRAMHAVIDRQKNHGMHFRVLAKALRLSGGDHIHAGTVVGKLEGERDITLGFVDLLRDDYFEKDRSRGIYFTQDWVSLPGVLPVASGGIHVWHMPALTEIFGDDSVLQFGGGTLGHPWGNAPGAVANRVALEACVQARNEGRDLAREGNEIIREAAKWSPELAAACEVWKEIKFEFPAMDTL.

Position 4 is an N6,N6,N6-trimethyllysine (lysine 4). Substrate-binding residues include asparagine 113 and threonine 163. Lysine 165 functions as the Proton acceptor in the catalytic mechanism. Position 167 (lysine 167) interacts with substrate. Residues lysine 191, aspartate 193, and glutamate 194 each contribute to the Mg(2+) site. Position 191 is an N6-carboxylysine (lysine 191). Histidine 284 acts as the Proton acceptor in catalysis. Substrate-binding residues include arginine 285, histidine 317, and serine 369.

Belongs to the RuBisCO large chain family. Type I subfamily. Heterohexadecamer of 8 large chains and 8 small chains; disulfide-linked. The disulfide link is formed within the large subunit homodimers. The cofactor is Mg(2+). The disulfide bond which can form in the large chain dimeric partners within the hexadecamer appears to be associated with oxidative stress and protein turnover.

The protein localises to the plastid. Its subcellular location is the chloroplast. The enzyme catalyses 2 (2R)-3-phosphoglycerate + 2 H(+) = D-ribulose 1,5-bisphosphate + CO2 + H2O. The catalysed reaction is D-ribulose 1,5-bisphosphate + O2 = 2-phosphoglycolate + (2R)-3-phosphoglycerate + 2 H(+). RuBisCO catalyzes two reactions: the carboxylation of D-ribulose 1,5-bisphosphate, the primary event in carbon dioxide fixation, as well as the oxidative fragmentation of the pentose substrate in the photorespiration process. Both reactions occur simultaneously and in competition at the same active site. This chain is Ribulose bisphosphate carboxylase large chain, found in Casuarina equisetifolia (Beach she-oak).